The sequence spans 501 residues: Glucose-6-phosphate exchanger SLC37A2 (501 aa).

A helical transmembrane segment spans residues Ser-19–Ser-39. N-linked (GlcNAc...) asparagine glycans are attached at residues Asn-53, Asn-62, and Asn-68. Transmembrane regions (helical) follow at residues Gly-88–Phe-108, Leu-118–Trp-138, Tyr-145–Val-165, Ser-189–Leu-209, and Ser-210–Ile-230. Residues Pro-240 to Cys-262 form a disordered region. A run of 6 helical transmembrane segments spans residues Leu-302–Ile-322, Gly-334–Val-354, Ala-362–Ile-382, Ile-391–Ala-411, Ala-434–Ile-454, and Val-462–Tyr-482.

The protein belongs to the major facilitator superfamily. Organophosphate:Pi antiporter (OPA) (TC 2.A.1.4) family. As to expression, detected in intestine and pancreas. Lower expression is also detected in liver and kidney.

It localises to the endoplasmic reticulum membrane. It carries out the reaction D-glucose 6-phosphate(in) + phosphate(out) = D-glucose 6-phosphate(out) + phosphate(in). Inhibited by vanadate but not by chlorogenic acid. In terms of biological role, inorganic phosphate and glucose-6-phosphate antiporter. May transport cytoplasmic glucose-6-phosphate into the lumen of the endoplasmic reticulum and translocate inorganic phosphate into the opposite direction. Independent of a lumenal glucose-6-phosphatase. May not play a role in homeostatic regulation of blood glucose levels. In Homo sapiens (Human), this protein is Glucose-6-phosphate exchanger SLC37A2.